Reading from the N-terminus, the 796-residue chain is Protocadherin beta-3 (796 aa).

The signal sequence occupies residues 1–26; the sequence is MEAGGERFLRQRQVLLLFVFLGGSLA. The Extracellular segment spans residues 27–690; that stretch reads GSESRRYSVA…AQADLLTVYL (664 aa). Cadherin domains follow at residues 35-133, 138-242, 247-347, 352-451, and 456-561; these read VAEE…SPVF, MHLK…APEF, YEVA…PPEL, VNSP…APAF, and YTLF…SPFV. Asparagine 169 carries an N-linked (GlcNAc...) asparagine glycan. Residues asparagine 418 and asparagine 436 are each glycosylated (N-linked (GlcNAc...) asparagine). An N-linked (GlcNAc...) asparagine glycan is attached at asparagine 567. Residues 568–671 enclose the Cadherin 6 domain; the sequence is GSAPCTELVP…LVDGFSQPYL (104 aa). Residues 691–711 form a helical membrane-spanning segment; that stretch reads VVALASVSSLFLFSVLLFVAV. Residues 712 to 796 lie on the Cytoplasmic side of the membrane; it reads RLCRRSRAAS…PSFRKSFEFS (85 aa).

The protein localises to the cell membrane. Its function is as follows. Potential calcium-dependent cell-adhesion protein. May be involved in the establishment and maintenance of specific neuronal connections in the brain. The polypeptide is Protocadherin beta-3 (PCDHB3) (Homo sapiens (Human)).